The following is a 476-amino-acid chain: NADP-dependent glyceraldehyde-3-phosphate dehydrogenase (476 aa).

R103 is a binding site for substrate. S151 is a binding site for NADP(+). 154–155 (NY) is a binding site for substrate. NADP(+) is bound by residues K177, T180, D215, and 230–251 (GSTP…MLEL). Residues E250 and C284 contribute to the active site. 283-285 (RCT) provides a ligand contact to substrate. E377 is an NADP(+) binding site. A substrate-binding site is contributed by R437.

Belongs to the aldehyde dehydrogenase family. As to quaternary structure, homotetramer.

It carries out the reaction D-glyceraldehyde 3-phosphate + NADP(+) + H2O = (2R)-3-phosphoglycerate + NADPH + 2 H(+). Catalyzes the irreversible NADP-dependent oxidation of glyceraldehyde-3-phosphate to 3-phosphoglycerate. Is not able to use NAD instead of NADP. May play an important role in NADPH production in S.equinus. The chain is NADP-dependent glyceraldehyde-3-phosphate dehydrogenase (gapN) from Streptococcus equinus (Streptococcus bovis).